Reading from the N-terminus, the 156-residue chain is SsrA-binding protein (156 aa).

The span at 135–150 (KRDTIKDREWQRDRSR) shows a compositional bias: basic and acidic residues. Positions 135–156 (KRDTIKDREWQRDRSRIMKKNT) are disordered.

The protein belongs to the SmpB family.

The protein localises to the cytoplasm. In terms of biological role, required for rescue of stalled ribosomes mediated by trans-translation. Binds to transfer-messenger RNA (tmRNA), required for stable association of tmRNA with ribosomes. tmRNA and SmpB together mimic tRNA shape, replacing the anticodon stem-loop with SmpB. tmRNA is encoded by the ssrA gene; the 2 termini fold to resemble tRNA(Ala) and it encodes a 'tag peptide', a short internal open reading frame. During trans-translation Ala-aminoacylated tmRNA acts like a tRNA, entering the A-site of stalled ribosomes, displacing the stalled mRNA. The ribosome then switches to translate the ORF on the tmRNA; the nascent peptide is terminated with the 'tag peptide' encoded by the tmRNA and targeted for degradation. The ribosome is freed to recommence translation, which seems to be the essential function of trans-translation. This Legionella pneumophila (strain Paris) protein is SsrA-binding protein.